We begin with the raw amino-acid sequence, 269 residues long: Formamidopyrimidine-DNA glycosylase (269 aa).

The Schiff-base intermediate with DNA role is filled by Pro-2. Catalysis depends on Glu-3, which acts as the Proton donor. Lys-57 acts as the Proton donor; for beta-elimination activity in catalysis. Residues His-90, Arg-109, and Arg-150 each contribute to the DNA site. The FPG-type zinc-finger motif lies at 235 to 269; the sequence is QVYGRAGEACLTCGTTIKRSKHGQRTTFYCPHCQR. Residue Arg-259 is the Proton donor; for delta-elimination activity of the active site.

This sequence belongs to the FPG family. In terms of assembly, monomer. Zn(2+) is required as a cofactor.

It catalyses the reaction Hydrolysis of DNA containing ring-opened 7-methylguanine residues, releasing 2,6-diamino-4-hydroxy-5-(N-methyl)formamidopyrimidine.. It carries out the reaction 2'-deoxyribonucleotide-(2'-deoxyribose 5'-phosphate)-2'-deoxyribonucleotide-DNA = a 3'-end 2'-deoxyribonucleotide-(2,3-dehydro-2,3-deoxyribose 5'-phosphate)-DNA + a 5'-end 5'-phospho-2'-deoxyribonucleoside-DNA + H(+). Functionally, involved in base excision repair of DNA damaged by oxidation or by mutagenic agents. Acts as a DNA glycosylase that recognizes and removes damaged bases. Has a preference for oxidized purines, such as 7,8-dihydro-8-oxoguanine (8-oxoG). Has AP (apurinic/apyrimidinic) lyase activity and introduces nicks in the DNA strand. Cleaves the DNA backbone by beta-delta elimination to generate a single-strand break at the site of the removed base with both 3'- and 5'-phosphates. In Edwardsiella ictaluri (strain 93-146), this protein is Formamidopyrimidine-DNA glycosylase.